Consider the following 126-residue polypeptide: Fluoride-specific ion channel FluC (126 aa).

Transmembrane regions (helical) follow at residues 4–24 (PLLS…FLGL), 33–53 (IPLG…FAMA), 67–87 (FVIT…IEIV), and 97–117 (MAML…CLGL). 2 residues coordinate Na(+): G74 and T77.

It belongs to the fluoride channel Fluc/FEX (TC 1.A.43) family.

The protein localises to the cell inner membrane. It carries out the reaction fluoride(in) = fluoride(out). Na(+) is not transported, but it plays an essential structural role and its presence is essential for fluoride channel function. Functionally, fluoride-specific ion channel. Important for reducing fluoride concentration in the cell, thus reducing its toxicity. This chain is Fluoride-specific ion channel FluC, found in Acinetobacter baumannii (strain SDF).